The primary structure comprises 270 residues: Thiazole synthase (270 aa).

Residue Lys111 is the Schiff-base intermediate with DXP of the active site. Residues Gly172, 198-199, and 220-221 contribute to the 1-deoxy-D-xylulose 5-phosphate site; these read AG and NT.

The protein belongs to the ThiG family. As to quaternary structure, homotetramer. Forms heterodimers with either ThiH or ThiS.

It localises to the cytoplasm. The catalysed reaction is [ThiS sulfur-carrier protein]-C-terminal-Gly-aminoethanethioate + 2-iminoacetate + 1-deoxy-D-xylulose 5-phosphate = [ThiS sulfur-carrier protein]-C-terminal Gly-Gly + 2-[(2R,5Z)-2-carboxy-4-methylthiazol-5(2H)-ylidene]ethyl phosphate + 2 H2O + H(+). Its pathway is cofactor biosynthesis; thiamine diphosphate biosynthesis. In terms of biological role, catalyzes the rearrangement of 1-deoxy-D-xylulose 5-phosphate (DXP) to produce the thiazole phosphate moiety of thiamine. Sulfur is provided by the thiocarboxylate moiety of the carrier protein ThiS. In vitro, sulfur can be provided by H(2)S. The sequence is that of Thiazole synthase from Methylococcus capsulatus (strain ATCC 33009 / NCIMB 11132 / Bath).